A 145-amino-acid polypeptide reads, in one-letter code: Large ribosomal subunit protein uL14m (145 aa).

Residues 1-30 (MAFSSGLWGPCVHMSRAFSQRCFSTTGSLG) constitute a mitochondrion transit peptide.

This sequence belongs to the universal ribosomal protein uL14 family. Component of the mitochondrial ribosome large subunit (39S) which comprises a 16S rRNA and about 50 distinct proteins. Interacts with MALSU1.

The protein resides in the mitochondrion. Its function is as follows. May form part of 2 intersubunit bridges in the assembled ribosome. Upon binding to MALSU1, intersubunit bridge formation is blocked, preventing ribosome formation and repressing translation. The protein is Large ribosomal subunit protein uL14m (MRPL14) of Bos taurus (Bovine).